The following is a 261-amino-acid chain: Claudin-18 (261 aa).

The Cytoplasmic segment spans residues M1–C6. The chain crosses the membrane as a helical span at residues Q7–M27. Topologically, residues D28 to R80 are extracellular. A helical membrane pass occupies residues A81–L101. At K102–G122 the chain is on the cytoplasmic side. Residues I123 to L143 form a helical membrane-spanning segment. At V144–A174 the chain is on the extracellular side. The helical transmembrane segment at L175–A195 threads the bilayer. The required for role in regulation of RANKL-induced osteoclast differentiation stretch occupies residues A195 to V261. Residues C196 to V261 are Cytoplasmic-facing. S214 is subject to Phosphoserine. The tract at residues S228–V261 is disordered. A compositionally biased stretch (basic and acidic residues) spans K239–D249.

It belongs to the claudin family. Interacts with TJP2/ZO-2. Interacts with TJP1/ZO-1. Interacts with YAP1 (phosphorylated); the interaction sequesters YAP1 away from the nucleus and thereby restricts transcription of YAP1 target genes. Interacts with CLDN19.

Its subcellular location is the cell junction. The protein localises to the tight junction. It localises to the cell membrane. Functionally, involved in alveolar fluid homeostasis via regulation of alveolar epithelial tight junction composition and therefore ion transport and solute permeability, potentially via downstream regulation of the actin cytoskeleton organization and beta-2-adrenergic signaling. Required for lung alveolarization and maintenance of the paracellular alveolar epithelial barrier. Acts to maintain epithelial progenitor cell proliferation and organ size, via regulation of YAP1 localization away from the nucleus and thereby restriction of YAP1 target gene transcription. Acts as a negative regulator of RANKL-induced osteoclast differentiation, potentially via relocation of TJP2/ZO-2 away from the nucleus, subsequently involved in bone resorption in response to calcium deficiency. Mediates the osteoprotective effects of estrogen, potentially via acting downstream of estrogen signaling independently of RANKL signaling pathways. This is Claudin-18 (CLDN18) from Bos taurus (Bovine).